Here is a 146-residue protein sequence, read N- to C-terminus: 3-hydroxyacyl-[acyl-carrier-protein] dehydratase FabZ (146 aa).

The active site involves H49.

Belongs to the thioester dehydratase family. FabZ subfamily.

The protein localises to the cytoplasm. The catalysed reaction is a (3R)-hydroxyacyl-[ACP] = a (2E)-enoyl-[ACP] + H2O. Its function is as follows. Involved in unsaturated fatty acids biosynthesis. Catalyzes the dehydration of short chain beta-hydroxyacyl-ACPs and long chain saturated and unsaturated beta-hydroxyacyl-ACPs. The protein is 3-hydroxyacyl-[acyl-carrier-protein] dehydratase FabZ of Pseudomonas syringae pv. tomato (strain ATCC BAA-871 / DC3000).